A 104-amino-acid chain; its full sequence is Large ribosomal subunit protein uL24 (104 aa).

This sequence belongs to the universal ribosomal protein uL24 family. Part of the 50S ribosomal subunit.

One of two assembly initiator proteins, it binds directly to the 5'-end of the 23S rRNA, where it nucleates assembly of the 50S subunit. Functionally, one of the proteins that surrounds the polypeptide exit tunnel on the outside of the subunit. The polypeptide is Large ribosomal subunit protein uL24 (Aliivibrio fischeri (strain ATCC 700601 / ES114) (Vibrio fischeri)).